The chain runs to 254 residues: NAD kinase (254 aa).

The Proton acceptor role is filled by D44. NAD(+)-binding positions include 44–45, 114–115, D144, A152, 155–160, and A179; these read DG, NE, and TAYNYS.

It belongs to the NAD kinase family. Requires a divalent metal cation as cofactor.

It localises to the cytoplasm. The catalysed reaction is NAD(+) + ATP = ADP + NADP(+) + H(+). Functionally, involved in the regulation of the intracellular balance of NAD and NADP, and is a key enzyme in the biosynthesis of NADP. Catalyzes specifically the phosphorylation on 2'-hydroxyl of the adenosine moiety of NAD to yield NADP. The polypeptide is NAD kinase (Cereibacter sphaeroides (strain ATCC 17025 / ATH 2.4.3) (Rhodobacter sphaeroides)).